Consider the following 96-residue polypeptide: Co-chaperonin GroES (96 aa).

Belongs to the GroES chaperonin family. As to quaternary structure, heptamer of 7 subunits arranged in a ring. Interacts with the chaperonin GroEL.

It is found in the cytoplasm. In terms of biological role, together with the chaperonin GroEL, plays an essential role in assisting protein folding. The GroEL-GroES system forms a nano-cage that allows encapsulation of the non-native substrate proteins and provides a physical environment optimized to promote and accelerate protein folding. GroES binds to the apical surface of the GroEL ring, thereby capping the opening of the GroEL channel. This chain is Co-chaperonin GroES, found in Herminiimonas arsenicoxydans.